The chain runs to 170 residues: MVDTTKNTKLFTSYGVTTSKTTTPEIAAKLISKAKRPLLVVGTKVLDPELLDRAVKIAQKANIPIAATGSSMPGFVGKDVDAKYINLHQLGFYVTDPNWPGLDGNGTYDTLIVLGHIKYYINQVLSGTKNFSTVKAIAIERNYIQNATMSFGNLSKADHYAALDELIDAL.

Belongs to the CdhB family. Heterotetramer of two alpha and two epsilon subunits. The ACDS complex is made up of alpha, epsilon, beta, gamma and delta subunits with a probable stoichiometry of (alpha(2)epsilon(2))(4)-beta(8)-(gamma(1)delta(1))(8).

Its pathway is one-carbon metabolism; methanogenesis from acetate. Functionally, part of a complex that catalyzes the reversible cleavage of acetyl-CoA, allowing growth on acetate as sole source of carbon and energy. The alpha-epsilon subcomponent functions as a carbon monoxide dehydrogenase. The precise role of the epsilon subunit is unclear; it may have a stabilizing role within the alpha(2)epsilon(2) component and/or be involved in electron transfer to FAD during a potential FAD-mediated CO oxidation. The chain is Acetyl-CoA decarbonylase/synthase complex subunit epsilon 2 (cdhB2) from Methanosarcina acetivorans (strain ATCC 35395 / DSM 2834 / JCM 12185 / C2A).